We begin with the raw amino-acid sequence, 387 residues long: 1-deoxy-D-xylulose 5-phosphate reductoisomerase (387 aa).

The NADPH site is built by T10, G11, S12, I13, and N124. K125 contributes to the 1-deoxy-D-xylulose 5-phosphate binding site. E126 provides a ligand contact to NADPH. Position 150 (D150) interacts with Mn(2+). Residues S151, E152, S176, and H199 each coordinate 1-deoxy-D-xylulose 5-phosphate. Residue E152 participates in Mn(2+) binding. G205 provides a ligand contact to NADPH. Residues S212, N217, K218, and E221 each contribute to the 1-deoxy-D-xylulose 5-phosphate site. Residue E221 coordinates Mn(2+).

It belongs to the DXR family. The cofactor is Mg(2+). Mn(2+) is required as a cofactor.

It carries out the reaction 2-C-methyl-D-erythritol 4-phosphate + NADP(+) = 1-deoxy-D-xylulose 5-phosphate + NADPH + H(+). It participates in isoprenoid biosynthesis; isopentenyl diphosphate biosynthesis via DXP pathway; isopentenyl diphosphate from 1-deoxy-D-xylulose 5-phosphate: step 1/6. Catalyzes the NADPH-dependent rearrangement and reduction of 1-deoxy-D-xylulose-5-phosphate (DXP) to 2-C-methyl-D-erythritol 4-phosphate (MEP). In Clostridium beijerinckii (strain ATCC 51743 / NCIMB 8052) (Clostridium acetobutylicum), this protein is 1-deoxy-D-xylulose 5-phosphate reductoisomerase.